The following is a 91-amino-acid chain: Small ribosomal subunit protein uS19 (91 aa).

It belongs to the universal ribosomal protein uS19 family.

Its function is as follows. Protein S19 forms a complex with S13 that binds strongly to the 16S ribosomal RNA. This is Small ribosomal subunit protein uS19 from Pseudomonas paraeruginosa (strain DSM 24068 / PA7) (Pseudomonas aeruginosa (strain PA7)).